Consider the following 427-residue polypeptide: Serine hydroxymethyltransferase (427 aa).

Residues Leu118 and 122–124 (GHL) each bind (6S)-5,6,7,8-tetrahydrofolate. Residue Lys227 is modified to N6-(pyridoxal phosphate)lysine. (6S)-5,6,7,8-tetrahydrofolate contacts are provided by residues Glu243 and 351–353 (SPF).

This sequence belongs to the SHMT family. In terms of assembly, homodimer. Pyridoxal 5'-phosphate serves as cofactor.

It localises to the cytoplasm. The enzyme catalyses (6R)-5,10-methylene-5,6,7,8-tetrahydrofolate + glycine + H2O = (6S)-5,6,7,8-tetrahydrofolate + L-serine. The protein operates within one-carbon metabolism; tetrahydrofolate interconversion. Its pathway is amino-acid biosynthesis; glycine biosynthesis; glycine from L-serine: step 1/1. In terms of biological role, catalyzes the reversible interconversion of serine and glycine with tetrahydrofolate (THF) serving as the one-carbon carrier. This reaction serves as the major source of one-carbon groups required for the biosynthesis of purines, thymidylate, methionine, and other important biomolecules. Also exhibits THF-independent aldolase activity toward beta-hydroxyamino acids, producing glycine and aldehydes, via a retro-aldol mechanism. The polypeptide is Serine hydroxymethyltransferase (Thermotoga neapolitana (strain ATCC 49049 / DSM 4359 / NBRC 107923 / NS-E)).